We begin with the raw amino-acid sequence, 212 residues long: Glutathione S-transferase P 1 (212 aa).

One can recognise a GST N-terminal domain in the interval proline 2–glycine 83. Glutathione is bound by residues tyrosine 8, arginine 14, tryptophan 39, lysine 47, glutamine 54–leucine 55, and glutamine 67–serine 68. The region spanning asparagine 85–isoleucine 206 is the GST C-terminal domain.

Belongs to the GST superfamily. Pi family. As to quaternary structure, homodimer. As to expression, expressed only in embryos. Not expressed in liver, lung, heart, kidney and ovary.

It is found in the cytoplasm. It localises to the mitochondrion. The protein resides in the nucleus. The catalysed reaction is RX + glutathione = an S-substituted glutathione + a halide anion + H(+). Conjugation of reduced glutathione to a wide number of exogenous and endogenous hydrophobic electrophiles. Highly active towards 1-chloro-2,4-dinitrobenzene and organic isothiocyanates, but shows no detectable activity towards 1,2-dichloro-4-nitrobenzene, p-nitrobenzylchloride, trans-4-phenyl-3-buten-2-one (tPBO) and ethacrynic acid. May be associated with cellular proliferation. The polypeptide is Glutathione S-transferase P 1 (gstp1) (Xenopus laevis (African clawed frog)).